Consider the following 102-residue polypeptide: Probable non-specific lipid-transfer protein (102 aa).

An N-terminal signal peptide occupies residues 1–35; the sequence is MAMAMGMAMRKEAAVAVMMVMVVTLAAGADAGAGA. 4 disulfide bridges follow: Cys-37/Cys-71, Cys-45/Cys-59, Cys-60/Cys-95, and Cys-69/Cys-102.

The protein belongs to the plant LTP family. B11E subfamily. As to expression, aleurone.

Potential phospholipid transfer protein. In Hordeum vulgare (Barley), this protein is Probable non-specific lipid-transfer protein (LTP2).